We begin with the raw amino-acid sequence, 269 residues long: Tryptophan synthase alpha chain (269 aa).

Active-site proton acceptor residues include Glu-49 and Asp-60.

Belongs to the TrpA family. In terms of assembly, tetramer of two alpha and two beta chains.

It carries out the reaction (1S,2R)-1-C-(indol-3-yl)glycerol 3-phosphate + L-serine = D-glyceraldehyde 3-phosphate + L-tryptophan + H2O. It participates in amino-acid biosynthesis; L-tryptophan biosynthesis; L-tryptophan from chorismate: step 5/5. In terms of biological role, the alpha subunit is responsible for the aldol cleavage of indoleglycerol phosphate to indole and glyceraldehyde 3-phosphate. The chain is Tryptophan synthase alpha chain from Actinobacillus pleuropneumoniae serotype 3 (strain JL03).